Consider the following 369-residue polypeptide: Uroporphyrinogen decarboxylase (369 aa).

Residues R39, A41, R43, R52, D88, Y166, S221, and H341 each contribute to the coproporphyrinogen I site. 3 residues coordinate coproporphyrinogen III: R39, A41, and R43. Residues D88, Y166, S221, and H341 each contribute to the coproporphyrinogen III site.

It belongs to the uroporphyrinogen decarboxylase family. Homodimer.

It localises to the cytoplasm. Its subcellular location is the cytosol. It carries out the reaction uroporphyrinogen III + 4 H(+) = coproporphyrinogen III + 4 CO2. It catalyses the reaction uroporphyrinogen I + 4 H(+) = coproporphyrinogen I + 4 CO2. It participates in porphyrin-containing compound metabolism; protoporphyrin-IX biosynthesis; coproporphyrinogen-III from 5-aminolevulinate: step 4/4. In terms of biological role, catalyzes the sequential decarboxylation of the four acetate side chains of uroporphyrinogen to form coproporphyrinogen and participates in the fifth step in the heme biosynthetic pathway. Isomer I or isomer III of uroporphyrinogen may serve as substrate, but only coproporphyrinogen III can ultimately be converted to heme. In vitro also decarboxylates pentacarboxylate porphyrinogen I. The sequence is that of Uroporphyrinogen decarboxylase from Danio rerio (Zebrafish).